Reading from the N-terminus, the 423-residue chain is Ribosome biogenesis protein WDR12 homolog (423 aa).

Residues 10–93 (VQVHLKTKQE…EDAIEIEYVE (84 aa)) are ubiquitin-like (UBL) domain. 7 WD repeats span residues 105-142 (LHDD…ILTI), 144-186 (GHTA…NAVE), 193-232 (GHER…AGGD), 253-291 (GHRE…IKTE), 293-332 (STNK…GSIV), 338-378 (GHNA…APLY), and 382-420 (GHGE…VETM).

It belongs to the WD repeat WDR12/YTM1 family.

The protein resides in the nucleus. It localises to the nucleolus. It is found in the nucleoplasm. Required for maturation of ribosomal RNAs and formation of the large ribosomal subunit. The chain is Ribosome biogenesis protein WDR12 homolog from Drosophila willistoni (Fruit fly).